Consider the following 148-residue polypeptide: UPF0178 protein SH2212 (148 aa).

The protein belongs to the UPF0178 family.

The protein is UPF0178 protein SH2212 of Staphylococcus haemolyticus (strain JCSC1435).